Here is a 419-residue protein sequence, read N- to C-terminus: F-box/FBD/LRR-repeat protein At4g26340 (419 aa).

In terms of domain architecture, F-box spans 1–53 (MDRISQLSDDLLLQILSFIPGKDVVATSLLSKRWQSLWMLVSELEYDDSYHTG). LRR repeat units follow at residues 55 to 81 (YKSFSQFVYRSLLSNNAPVIKHLHLNL), 132 to 159 (TLRLINFVLLDVPSSVCLPSLKVLHLKT), 160 to 185 (VDYEDDASLPSLLFGCPNLEELFVER), 187 to 208 (DQDLEMDVTFVVPSLRRLSMID), 226 to 253 (YLNITDDAVYDVRQIENMPELVEAHVDI), 254 to 284 (TQGVTHKFLRALTSVRQLSLCLSLSEVMCPS), and 299 to 324 (VVKGWWDLLTSMLQDSPKLQSLKLID). Positions 339-389 (GWKLPSSVPECLLFSLEAFEWIGYKGRRGDREVATYVLKNAACLRTAKFSP) constitute an FBD domain.

The protein is F-box/FBD/LRR-repeat protein At4g26340 of Arabidopsis thaliana (Mouse-ear cress).